The sequence spans 144 residues: Deoxyuridine 5'-triphosphate nucleotidohydrolase (144 aa).

Residues 63–65 (RSG), asparagine 76, and 80–82 (TID) contribute to the substrate site.

It belongs to the dUTPase family. It depends on Mg(2+) as a cofactor.

It carries out the reaction dUTP + H2O = dUMP + diphosphate + H(+). Its pathway is pyrimidine metabolism; dUMP biosynthesis; dUMP from dCTP (dUTP route): step 2/2. Its function is as follows. This enzyme is involved in nucleotide metabolism: it produces dUMP, the immediate precursor of thymidine nucleotides and it decreases the intracellular concentration of dUTP so that uracil cannot be incorporated into DNA. The sequence is that of Deoxyuridine 5'-triphosphate nucleotidohydrolase from Alkaliphilus metalliredigens (strain QYMF).